The primary structure comprises 426 residues: Dihydroorotase (426 aa).

Zn(2+) contacts are provided by H58 and H60. Residues 60–62 (HLR) and N92 each bind substrate. D150, H177, and H230 together coordinate Zn(2+). Residue N276 participates in substrate binding. A Zn(2+)-binding site is contributed by D303. The active site involves D303. Substrate-binding positions include H307 and 321-322 (FG).

This sequence belongs to the metallo-dependent hydrolases superfamily. DHOase family. Class I DHOase subfamily. Zn(2+) serves as cofactor.

The catalysed reaction is (S)-dihydroorotate + H2O = N-carbamoyl-L-aspartate + H(+). The protein operates within pyrimidine metabolism; UMP biosynthesis via de novo pathway; (S)-dihydroorotate from bicarbonate: step 3/3. Its function is as follows. Catalyzes the reversible cyclization of carbamoyl aspartate to dihydroorotate. In Listeria welshimeri serovar 6b (strain ATCC 35897 / DSM 20650 / CCUG 15529 / CIP 8149 / NCTC 11857 / SLCC 5334 / V8), this protein is Dihydroorotase.